A 113-amino-acid polypeptide reads, in one-letter code: DNA-directed RNA polymerase subunit Rpo4 (113 aa).

Belongs to the eukaryotic RPB4 RNA polymerase subunit family. In terms of assembly, part of the 13-subunit RNA polymerase complex. Forms a stalk with Rpo7 that extends from the main structure.

The protein localises to the cytoplasm. It carries out the reaction RNA(n) + a ribonucleoside 5'-triphosphate = RNA(n+1) + diphosphate. DNA-dependent RNA polymerase (RNAP) catalyzes the transcription of DNA into RNA using the four ribonucleoside triphosphates as substrates. This subunit is less well bound than the others. In Saccharolobus solfataricus (strain ATCC 35092 / DSM 1617 / JCM 11322 / P2) (Sulfolobus solfataricus), this protein is DNA-directed RNA polymerase subunit Rpo4.